A 111-amino-acid polypeptide reads, in one-letter code: Vacuolar ATPase assembly integral membrane protein VMA21 (111 aa).

Residues 1–39 (MATRRIVATEKSILEKDDHIGSSPAAGEKSNITPAVPLD) are Cytoplasmic-facing. A helical membrane pass occupies residues 40–60 (VILKLLAFTLAMVVIPIGSYF). Topologically, residues 61-73 (VTVNSIFKGNSTY) are lumenal. A helical membrane pass occupies residues 74-94 (AGALAAIMANVVLVAYVVVAM). At 95–111 (NEDQTEQEKAKEGKKDR) the chain is on the cytoplasmic side. Positions 108-111 (KKDR) match the Prevents secretion from ER motif.

Belongs to the VMA21 family.

The protein resides in the endoplasmic reticulum membrane. It localises to the endoplasmic reticulum-Golgi intermediate compartment membrane. Its subcellular location is the cytoplasmic vesicle. It is found in the COPII-coated vesicle membrane. Its function is as follows. Required for the assembly of the V0 complex of the vacuolar ATPase (V-ATPase) in the endoplasmic reticulum. In Pyricularia oryzae (strain 70-15 / ATCC MYA-4617 / FGSC 8958) (Rice blast fungus), this protein is Vacuolar ATPase assembly integral membrane protein VMA21.